Reading from the N-terminus, the 185-residue chain is MKIKEIIVVEGKDDTVAIKRAVDADTIETNGSAIGDHVIEQVKLALQKRGVIIFTDPDYPGERIRKIISDKVPGCKHAFLPKEEALAKRKKGVGIEHASNESIRRALENIHEEMEAYTSEISWSDLVDAGLVGGEMAKSRRERMGKLLKIGYTNAKQLHKRLQMFQVSKESFAEAYKQVIQEERK.

Residues lysine 4–alanine 87 enclose the Toprim domain. Glutamate 10, aspartate 56, and aspartate 58 together coordinate Mg(2+).

It belongs to the ribonuclease M5 family. Requires Mg(2+) as cofactor.

The protein localises to the cytoplasm. The catalysed reaction is Endonucleolytic cleavage of RNA, removing 21 and 42 nucleotides, respectively, from the 5'- and 3'-termini of a 5S-rRNA precursor.. In terms of biological role, required for correct processing of both the 5' and 3' ends of 5S rRNA precursor. Cleaves both sides of a double-stranded region yielding mature 5S rRNA in one step. In Bacillus anthracis, this protein is Ribonuclease M5.